A 66-amino-acid polypeptide reads, in one-letter code: Toxin Boma6a (66 aa).

The LCN-type CS-alpha/beta domain occupies 2–64; the sequence is RDAYIAQNYN…VPIKVEGKCH (63 aa). Cystine bridges form between cysteine 12–cysteine 63, cysteine 16–cysteine 36, cysteine 22–cysteine 46, and cysteine 26–cysteine 48.

The protein belongs to the long (4 C-C) scorpion toxin superfamily. Sodium channel inhibitor family. Alpha subfamily. Expressed by the venom gland.

It localises to the secreted. Its function is as follows. Alpha toxins bind voltage-independently at site-3 of sodium channels (Nav) and inhibit the inactivation of the activated channels, thereby blocking neuronal transmission. The protein is Toxin Boma6a of Buthus occitanus mardochei (Moroccan scorpion).